The following is a 461-amino-acid chain: Ribosomal protein uS12 methylthiotransferase RimO (461 aa).

In terms of domain architecture, MTTase N-terminal spans 13-128; it reads PKVGFVSLGC…VMQHVHTHLP (116 aa). Residues Cys-22, Cys-58, Cys-87, Cys-159, Cys-163, and Cys-166 each coordinate [4Fe-4S] cluster. The region spanning 145-390 is the Radical SAM core domain; the sequence is LTPRHYAYLK…MEVAEEVSAK (246 aa). The 69-residue stretch at 393–461 folds into the TRAM domain; that stretch reads AKKVGKTLKV…ADGHDLWGEV (69 aa).

The protein belongs to the methylthiotransferase family. RimO subfamily. It depends on [4Fe-4S] cluster as a cofactor.

It localises to the cytoplasm. It carries out the reaction L-aspartate(89)-[ribosomal protein uS12]-hydrogen + (sulfur carrier)-SH + AH2 + 2 S-adenosyl-L-methionine = 3-methylsulfanyl-L-aspartate(89)-[ribosomal protein uS12]-hydrogen + (sulfur carrier)-H + 5'-deoxyadenosine + L-methionine + A + S-adenosyl-L-homocysteine + 2 H(+). Catalyzes the methylthiolation of an aspartic acid residue of ribosomal protein uS12. In Paraburkholderia phytofirmans (strain DSM 17436 / LMG 22146 / PsJN) (Burkholderia phytofirmans), this protein is Ribosomal protein uS12 methylthiotransferase RimO.